Reading from the N-terminus, the 142-residue chain is Large ribosomal subunit protein uL11 (142 aa).

It belongs to the universal ribosomal protein uL11 family. As to quaternary structure, part of the ribosomal stalk of the 50S ribosomal subunit. Interacts with L10 and the large rRNA to form the base of the stalk. L10 forms an elongated spine to which L12 dimers bind in a sequential fashion forming a multimeric L10(L12)X complex. One or more lysine residues are methylated.

In terms of biological role, forms part of the ribosomal stalk which helps the ribosome interact with GTP-bound translation factors. In Acinetobacter baylyi (strain ATCC 33305 / BD413 / ADP1), this protein is Large ribosomal subunit protein uL11.